We begin with the raw amino-acid sequence, 217 residues long: Biogenesis of lysosome-related organelles complex 1 subunit 4 (217 aa).

Residues 1–57 form a disordered region; that stretch reads MEGSFSDGGALPEGLAEEAEPQGAAWSGDSGTVSQSHSSASGPWEDEGAEDGAPGRD. A compositionally biased stretch (polar residues) spans 29 to 41; the sequence is DSGTVSQSHSSAS. Residues 136-165 adopt a coiled-coil conformation; sequence DRLEAFVRMVGGRVARMEEQVTKAEAELGT. Thr165 carries the post-translational modification Phosphothreonine.

Belongs to the BLOC1S4 family. In terms of assembly, interacts with BLOC1S5 and BLOC1S6. Component of the biogenesis of lysosome-related organelles complex 1 (BLOC-1) composed of BLOC1S1, BLOC1S2, BLOC1S3, BLOC1S4, BLOC1S5, BLOC1S6, DTNBP1/BLOC1S7 and SNAPIN/BLOC1S8. Octamer composed of one copy each BLOC1S1, BLOC1S2, BLOC1S3, BLOC1S4, BLOC1S5, BLOC1S6, DTNBP1/BLOC1S7 and SNAPIN/BLOC1S8. The BLOC-1 complex associates with the AP-3 protein complex and membrane protein cargos.

The protein localises to the cytoplasm. In terms of biological role, component of the BLOC-1 complex, a complex that is required for normal biogenesis of lysosome-related organelles (LRO), such as platelet dense granules and melanosomes. In concert with the AP-3 complex, the BLOC-1 complex is required to target membrane protein cargos into vesicles assembled at cell bodies for delivery into neurites and nerve terminals. The BLOC-1 complex, in association with SNARE proteins, is also proposed to be involved in neurite extension. Plays a role in intracellular vesicle trafficking. The sequence is that of Biogenesis of lysosome-related organelles complex 1 subunit 4 (BLOC1S4) from Homo sapiens (Human).